A 1092-amino-acid chain; its full sequence is Elongation factor 3 (1092 aa).

V92 is an ADP binding site. HEAT repeat units lie at residues 95-133, 138-175, 177-214, 218-255, 257-293, 294-331, and 333-370; these read MVKT…SPVS, PYMI…RLTP, ATKQ…TAPR, TAVP…LINN, DIEK…EVLP, PTLA…LVEK, and QIIA…KILT. E454 is a binding site for ADP. ABC transporter domains are found at residues 486–704 and 730–1044; these read EELC…YYEL and LKVQ…DKNK. 4 residues coordinate ADP: N766, E973, N976, and H1002. 2 disordered regions span residues 1023–1044 and 1063–1092; these read TPTG…DKNK and SKLS…DDDE. A compositionally biased stretch (basic residues) spans 1063–1075; sequence SKLSGKDLRKKRK. Basic and acidic residues predominate over residues 1076 to 1086; sequence EREARRKRGEE.

Belongs to the ABC transporter superfamily. ABCF family. EF3 subfamily.

Its subcellular location is the cytoplasm. The protein localises to the cytosol. It carries out the reaction ATP + H2O = ADP + phosphate + H(+). The protein operates within protein biosynthesis; polypeptide chain elongation. Its function is as follows. Ribosome-dependent ATPase that functions in cytoplasmic translation elongation. Required for the ATP-dependent release of deacylated tRNA from the ribosomal E-site during protein biosynthesis. Stimulates the eEF1A-dependent binding of aminoacyl-tRNA to the ribosomal A-site, which has reduced affinity for tRNA as long as the E-site is occupied. Assists translation termination by stimulating the release of nascent protein from the ribosome by release factors. This is Elongation factor 3 from Gonapodya prolifera (strain JEL478) (Monoblepharis prolifera).